We begin with the raw amino-acid sequence, 448 residues long: Tryptophan dimethylallyltransferase 2 (448 aa).

L-tryptophan is bound by residues 80–81 and glutamate 89; that span reads IL. Substrate contacts are provided by arginine 100, lysine 186, and tyrosine 188. Residues tyrosine 190 and arginine 249 each coordinate L-tryptophan. Residues arginine 262, lysine 264, tyrosine 266, glutamine 348, tyrosine 350, tyrosine 414, and tyrosine 418 each coordinate substrate.

Belongs to the tryptophan dimethylallyltransferase family. Homodimer.

It catalyses the reaction L-tryptophan + dimethylallyl diphosphate = 4-(3-methylbut-2-enyl)-L-tryptophan + diphosphate. It functions in the pathway alkaloid biosynthesis; ergot alkaloid biosynthesis. In terms of biological role, catalyzes the first step of ergot alkaloid biosynthesis. Ergot alkaloids, which are produced by endophyte fungi, can enhance plant host fitness, but also cause livestock toxicosis to host plants. This is Tryptophan dimethylallyltransferase 2 (dmaW2) from Claviceps purpurea (strain 20.1) (Ergot fungus).